Consider the following 478-residue polypeptide: Glycogen synthase (478 aa).

ADP-alpha-D-glucose is bound at residue K16.

Belongs to the glycosyltransferase 1 family. Bacterial/plant glycogen synthase subfamily.

The catalysed reaction is [(1-&gt;4)-alpha-D-glucosyl](n) + ADP-alpha-D-glucose = [(1-&gt;4)-alpha-D-glucosyl](n+1) + ADP + H(+). Its pathway is glycan biosynthesis; glycogen biosynthesis. In terms of biological role, synthesizes alpha-1,4-glucan chains using ADP-glucose. This Lachnospira eligens (strain ATCC 27750 / DSM 3376 / VPI C15-48 / C15-B4) (Eubacterium eligens) protein is Glycogen synthase.